Here is a 275-residue protein sequence, read N- to C-terminus: Formamidopyrimidine-DNA glycosylase (275 aa).

Proline 2 functions as the Schiff-base intermediate with DNA in the catalytic mechanism. Glutamate 3 (proton donor) is an active-site residue. The active-site Proton donor; for beta-elimination activity is the lysine 58. Residues histidine 91 and arginine 110 each contribute to the DNA site. The segment at glutamine 238 to lysine 272 adopts an FPG-type zinc-finger fold. Arginine 262 functions as the Proton donor; for delta-elimination activity in the catalytic mechanism.

Belongs to the FPG family. In terms of assembly, monomer. Zn(2+) serves as cofactor.

It carries out the reaction Hydrolysis of DNA containing ring-opened 7-methylguanine residues, releasing 2,6-diamino-4-hydroxy-5-(N-methyl)formamidopyrimidine.. The catalysed reaction is 2'-deoxyribonucleotide-(2'-deoxyribose 5'-phosphate)-2'-deoxyribonucleotide-DNA = a 3'-end 2'-deoxyribonucleotide-(2,3-dehydro-2,3-deoxyribose 5'-phosphate)-DNA + a 5'-end 5'-phospho-2'-deoxyribonucleoside-DNA + H(+). Its function is as follows. Involved in base excision repair of DNA damaged by oxidation or by mutagenic agents. Acts as a DNA glycosylase that recognizes and removes damaged bases. Has a preference for oxidized purines, such as 7,8-dihydro-8-oxoguanine (8-oxoG). Has AP (apurinic/apyrimidinic) lyase activity and introduces nicks in the DNA strand. Cleaves the DNA backbone by beta-delta elimination to generate a single-strand break at the site of the removed base with both 3'- and 5'-phosphates. This chain is Formamidopyrimidine-DNA glycosylase, found in Streptococcus pyogenes serotype M28 (strain MGAS6180).